A 62-amino-acid chain; its full sequence is Guanine nucleotide-binding protein subunit gamma (62 aa).

The interval 40 to 62 is disordered; sequence DMLVSGPTDQHNPFQEKKSCSVL. Positions 53-62 are enriched in basic and acidic residues; that stretch reads FQEKKSCSVL. Cys-59 is modified (cysteine methyl ester). A lipid anchor (S-geranylgeranyl cysteine) is attached at Cys-59. A propeptide spans 60–62 (removed in mature form); it reads SVL.

This sequence belongs to the G protein gamma family. As to quaternary structure, g proteins are composed of 3 units, alpha, beta and gamma. Interacts with gpb-1 and gpb-2. As to expression, predominantly expressed in the central nervous system.

It localises to the cell membrane. Its function is as follows. Guanine nucleotide-binding proteins (G proteins) are involved as a modulator or transducer in various transmembrane signaling systems. The beta and gamma chains are required for the GTPase activity, for replacement of GDP by GTP, and for G protein-effector interaction. This chain is Guanine nucleotide-binding protein subunit gamma (gpc-1), found in Caenorhabditis elegans.